A 163-amino-acid polypeptide reads, in one-letter code: Protein-export protein SecB (163 aa).

This sequence belongs to the SecB family. Homotetramer, a dimer of dimers. One homotetramer interacts with 1 SecA dimer.

It is found in the cytoplasm. One of the proteins required for the normal export of preproteins out of the cell cytoplasm. It is a molecular chaperone that binds to a subset of precursor proteins, maintaining them in a translocation-competent state. It also specifically binds to its receptor SecA. The sequence is that of Protein-export protein SecB from Brucella canis (strain ATCC 23365 / NCTC 10854 / RM-666).